Reading from the N-terminus, the 334-residue chain is Glyceraldehyde-3-phosphate dehydrogenase (334 aa).

NAD(+) contacts are provided by residues 12–13 (RI), Asp-37, Arg-81, and Ser-123. D-glyceraldehyde 3-phosphate contacts are provided by residues 153–155 (SCT) and Thr-184. Residue Cys-154 is the Nucleophile of the active site. Asn-185 is a binding site for NAD(+). D-glyceraldehyde 3-phosphate contacts are provided by residues Arg-199, 212–213 (TG), and Arg-235. Asn-314 contributes to the NAD(+) binding site.

It belongs to the glyceraldehyde-3-phosphate dehydrogenase family. Homotetramer.

It is found in the cytoplasm. It catalyses the reaction D-glyceraldehyde 3-phosphate + phosphate + NAD(+) = (2R)-3-phospho-glyceroyl phosphate + NADH + H(+). Its pathway is carbohydrate degradation; glycolysis; pyruvate from D-glyceraldehyde 3-phosphate: step 1/5. Functionally, catalyzes the oxidative phosphorylation of glyceraldehyde 3-phosphate (G3P) to 1,3-bisphosphoglycerate (BPG) using the cofactor NAD. The first reaction step involves the formation of a hemiacetal intermediate between G3P and a cysteine residue, and this hemiacetal intermediate is then oxidized to a thioester, with concomitant reduction of NAD to NADH. The reduced NADH is then exchanged with the second NAD, and the thioester is attacked by a nucleophilic inorganic phosphate to produce BPG. The polypeptide is Glyceraldehyde-3-phosphate dehydrogenase (gap) (Pseudomonas aeruginosa (strain ATCC 15692 / DSM 22644 / CIP 104116 / JCM 14847 / LMG 12228 / 1C / PRS 101 / PAO1)).